Here is a 1192-residue protein sequence, read N- to C-terminus: DNA topoisomerase 2 (1192 aa).

ATP is bound by residues asparagine 64, asparagine 95, and 142-149 (GTNGVGLK). Mg(2+) contacts are provided by glutamate 438, aspartate 539, and aspartate 541. Residues 707-1174 (IPNFLDGMTR…PGASVWLEEI (468 aa)) form the Topo IIA-type catalytic domain. Tyrosine 800 (O-(5'-phospho-DNA)-tyrosine intermediate) is an active-site residue.

Belongs to the type II topoisomerase family. The cofactor is Mg(2+). Mn(2+) serves as cofactor. It depends on Ca(2+) as a cofactor.

The protein localises to the host cytoplasm. The enzyme catalyses ATP-dependent breakage, passage and rejoining of double-stranded DNA.. Its function is as follows. Type II topoisomerase. Processively relaxes supercoiled DNA. Displays DNA-supercoiling activity only when associated with the viral histone-like protein. The sequence is that of DNA topoisomerase 2 (TOP) from African swine fever virus (strain Badajoz 1971 Vero-adapted) (Ba71V).